Consider the following 731-residue polypeptide: 1,4-alpha-glucan branching enzyme GlgB (731 aa).

D411 (nucleophile) is an active-site residue. The Proton donor role is filled by E464.

The protein belongs to the glycosyl hydrolase 13 family. GlgB subfamily. Monomer.

It carries out the reaction Transfers a segment of a (1-&gt;4)-alpha-D-glucan chain to a primary hydroxy group in a similar glucan chain.. It participates in glycan biosynthesis; glycogen biosynthesis. In terms of biological role, catalyzes the formation of the alpha-1,6-glucosidic linkages in glycogen by scission of a 1,4-alpha-linked oligosaccharide from growing alpha-1,4-glucan chains and the subsequent attachment of the oligosaccharide to the alpha-1,6 position. The chain is 1,4-alpha-glucan branching enzyme GlgB from Mycobacterium tuberculosis (strain ATCC 25177 / H37Ra).